A 476-amino-acid chain; its full sequence is Glycogen synthase (476 aa).

Residue Lys-15 coordinates ADP-alpha-D-glucose.

This sequence belongs to the glycosyltransferase 1 family. Bacterial/plant glycogen synthase subfamily.

It carries out the reaction [(1-&gt;4)-alpha-D-glucosyl](n) + ADP-alpha-D-glucose = [(1-&gt;4)-alpha-D-glucosyl](n+1) + ADP + H(+). The protein operates within glycan biosynthesis; glycogen biosynthesis. Functionally, synthesizes alpha-1,4-glucan chains using ADP-glucose. This is Glycogen synthase from Bacillus cereus (strain ZK / E33L).